A 207-amino-acid chain; its full sequence is Alpha-1-acid glycoprotein 1 (207 aa).

An N-terminal signal peptide occupies residues 1–18; the sequence is MALHMILVMLSLLPLLEA. Pyrrolidone carboxylic acid is present on Q19. N-linked (GlcNAc...) asparagine glycosylation is found at N25, N34, N76, N94, and N104. A disulfide bridge connects residues C91 and C184.

This sequence belongs to the calycin superfamily. Lipocalin family. As to expression, expressed by the liver and secreted in plasma.

The protein resides in the secreted. Functions as a transport protein in the blood stream. Binds various ligands in the interior of its beta-barrel domain. Appears to function in modulating the activity of the immune system during the acute-phase reaction. In Mus caroli (Ryukyu mouse), this protein is Alpha-1-acid glycoprotein 1 (Orm1).